The primary structure comprises 91 residues: DNA-directed RNA polymerase subunit Rpo11 (91 aa).

This sequence belongs to the archaeal Rpo11/eukaryotic RPB11/RPC19 RNA polymerase subunit family. Part of the RNA polymerase complex.

It is found in the cytoplasm. It catalyses the reaction RNA(n) + a ribonucleoside 5'-triphosphate = RNA(n+1) + diphosphate. In terms of biological role, DNA-dependent RNA polymerase (RNAP) catalyzes the transcription of DNA into RNA using the four ribonucleoside triphosphates as substrates. The sequence is that of DNA-directed RNA polymerase subunit Rpo11 from Methanococcoides burtonii (strain DSM 6242 / NBRC 107633 / OCM 468 / ACE-M).